The following is an 833-amino-acid chain: Disintegrin and metalloproteinase domain-containing protein 17 (833 aa).

An N-terminal signal peptide occupies residues 1–17 (MRQCALFLTSLVPIVLA). A Peptidase M12B domain is found at 223–474 (NTCKLLVVAD…KAQECFQERS (252 aa)). An interaction with classical swine fever virus envelope glycoprotein E2 region spans residues 301-345 (AKSYPNEEKDAWDVKMLLEQFSFDIAEEASKVCLAHLFTYQDFDM). Intrachain disulfides connect C365/C469, C423/C453, and C534/C555. A Zn(2+)-binding site is contributed by H405. Residue E406 is part of the active site. Residues H409 and H415 each coordinate Zn(2+). The Disintegrin domain occupies 475-563 (NKVCGNSRVD…ECPPPGNAED (89 aa)). A helical transmembrane segment spans residues 672 to 692 (IVGSVLVFSLMLWIPVSILVH). Disordered regions lie at residues 735–760 (TPGR…VPVA) and 772–833 (QEDP…ETEC). Composition is skewed to basic and acidic residues over residues 777–790 (TDSH…EKDP), 800–816 (SFED…EKAS), and 824–833 (SRVDSKETEC).

As to quaternary structure, (Microbial infection) Interacts (via metalloproteinase domain) with classical swine fever virus envelope glycoprotein E2; this interaction allows binding and probably entry of the virus into the cell. In terms of assembly, interacts with MAD2L1, MAPK14 and MUC1. Interacts with iRhom1/RHBDF1 and iRhom2/RHBDF2. Interacts with FRMD8 via its interaction with iRhom1/RHBDF1 and iRhom2/RHBDF2. Zn(2+) is required as a cofactor. Post-translationally, the precursor is cleaved by a furin endopeptidase. In terms of processing, phosphorylated.

It localises to the membrane. The enzyme catalyses Narrow endopeptidase specificity. Cleaves Pro-Leu-Ala-Gln-Ala-|-Val-Arg-Ser-Ser-Ser in the membrane-bound, 26-kDa form of tumor necrosis factor alpha (TNFalpha). Similarly cleaves other membrane-anchored, cell-surface proteins to 'shed' the extracellular domains.. In terms of biological role, transmembrane metalloprotease which mediates the ectodomain shedding of a myriad of transmembrane proteins including adhesion proteins, growth factor precursors and cytokines important for inflammation and immunity. Cleaves the membrane-bound precursor of TNF-alpha to its mature soluble form. Responsible for the proteolytical release of soluble JAM3 from endothelial cells surface. Responsible for the proteolytic release of several other cell-surface proteins, including p75 TNF-receptor, interleukin 1 receptor type II, p55 TNF-receptor, transforming growth factor-alpha, L-selectin, growth hormone receptor, MUC1 and the amyloid precursor protein. Acts as an activator of Notch pathway by mediating cleavage of Notch, generating the membrane-associated intermediate fragment called Notch extracellular truncation (NEXT). Plays a role in the proteolytic processing of ACE2. Plays a role in hemostasis through shedding of GP1BA, the platelet glycoprotein Ib alpha chain. Mediates the proteolytic cleavage of LAG3, leading to release the secreted form of LAG3. Mediates the proteolytic cleavage of IL6R, leading to the release of secreted form of IL6R. Mediates the proteolytic cleavage and shedding of FCGR3A upon NK cell stimulation, a mechanism that allows for increased NK cell motility and detachment from opsonized target cells. Cleaves TREM2, resulting in shedding of the TREM2 ectodomain. Functionally, (Microbial infection) Acts as a receptor for classical swine fever virus. This is Disintegrin and metalloproteinase domain-containing protein 17 (ADAM17) from Sus scrofa (Pig).